The chain runs to 1002 residues: Calcium-transporting ATPase sarcoplasmic/endoplasmic reticulum type (1002 aa).

The Cytoplasmic segment spans residues Met-1–Ser-48. The chain crosses the membrane as a helical span at residues Ile-49–Ala-69. Over Ile-70 to Val-89 the chain is Lumenal. The helical transmembrane segment at Glu-90–Arg-110 threads the bilayer. Over Asn-111–Leu-253 the chain is Cytoplasmic. The helical transmembrane segment at Asp-254–Ala-273 threads the bilayer. The Lumenal segment spans residues Ile-274–Tyr-295. Residues Phe-296–Ala-313 traverse the membrane as a helical segment. Positions 304, 305, 307, and 309 each coordinate Ca(2+). The Cytoplasmic segment spans residues Val-314–Met-757. Asp-351 (4-aspartylphosphate intermediate) is an active-site residue. 2 residues coordinate Mg(2+): Asp-703 and Asp-707. Residues Lys-758–Leu-777 traverse the membrane as a helical segment. Residues Asn-768 and Glu-771 each coordinate Ca(2+). At Thr-778–Leu-787 the chain is on the lumenal side. Residues Ile-788 to Gly-808 form a helical membrane-spanning segment. The Ca(2+) site is built by Asn-796, Thr-799, and Asp-800. Residues Phe-809–Leu-828 lie on the Cytoplasmic side of the membrane. A helical transmembrane segment spans residues Ile-829 to Ala-851. The Lumenal portion of the chain corresponds to Ala-852–Met-897. A helical membrane pass occupies residues Thr-898–Ser-917. A Ca(2+)-binding site is contributed by Glu-908. Residues Glu-918–Asn-930 are Cytoplasmic-facing. Residues Leu-931–Tyr-949 traverse the membrane as a helical segment. The Lumenal portion of the chain corresponds to Val-950 to Ala-964. Residues Glu-965 to Lys-985 traverse the membrane as a helical segment. Over Phe-986 to Trp-1002 the chain is Cytoplasmic.

The protein belongs to the cation transport ATPase (P-type) (TC 3.A.3) family.

It localises to the endoplasmic reticulum membrane. The protein localises to the sarcoplasmic reticulum membrane. The enzyme catalyses Ca(2+)(in) + ATP + H2O = Ca(2+)(out) + ADP + phosphate + H(+). Its function is as follows. This magnesium-dependent enzyme catalyzes the hydrolysis of ATP coupled with the transport of calcium. In Drosophila pseudoobscura pseudoobscura (Fruit fly), this protein is Calcium-transporting ATPase sarcoplasmic/endoplasmic reticulum type.